The primary structure comprises 408 residues: Serine/threonine transporter SstT (408 aa).

The next 9 helical transmembrane spans lie at 14–34, 43–63, 83–103, 143–163, 181–201, 219–239, 247–269, 290–310, and 332–352; these read GNLI…GIFS, IFGA…VFIL, IIFL…SISF, ALSS…GFAL, VLKI…GLVA, LIIL…LIVF, YPLI…SSAA, ISIP…IAIL, and VLAA…LLLI.

Belongs to the dicarboxylate/amino acid:cation symporter (DAACS) (TC 2.A.23) family.

The protein localises to the cell inner membrane. It carries out the reaction L-serine(in) + Na(+)(in) = L-serine(out) + Na(+)(out). The enzyme catalyses L-threonine(in) + Na(+)(in) = L-threonine(out) + Na(+)(out). Involved in the import of serine and threonine into the cell, with the concomitant import of sodium (symport system). The polypeptide is Serine/threonine transporter SstT (Campylobacter lari (strain RM2100 / D67 / ATCC BAA-1060)).